The following is a 170-amino-acid chain: 3-hydroxyanthranilate 3,4-dioxygenase (170 aa).

Position 44 (R44) interacts with O2. Positions 48, 54, and 92 each coordinate Fe cation. Substrate is bound at residue E54. Residues R96 and E106 each coordinate substrate. C121, C124, C158, and C161 together coordinate a divalent metal cation.

This sequence belongs to the 3-HAO family. Requires Fe(2+) as cofactor.

The protein localises to the cytoplasm. It catalyses the reaction 3-hydroxyanthranilate + O2 = (2Z,4Z)-2-amino-3-carboxymuconate 6-semialdehyde. It participates in cofactor biosynthesis; NAD(+) biosynthesis; quinolinate from L-kynurenine: step 3/3. Catalyzes the oxidative ring opening of 3-hydroxyanthranilate to 2-amino-3-carboxymuconate semialdehyde, which spontaneously cyclizes to quinolinate. This Scheffersomyces stipitis (strain ATCC 58785 / CBS 6054 / NBRC 10063 / NRRL Y-11545) (Yeast) protein is 3-hydroxyanthranilate 3,4-dioxygenase.